A 507-amino-acid chain; its full sequence is ATP synthase subunit alpha, chloroplastic (507 aa).

170-177 contacts ATP; sequence GDRQTGKT.

The protein belongs to the ATPase alpha/beta chains family. As to quaternary structure, F-type ATPases have 2 components, CF(1) - the catalytic core - and CF(0) - the membrane proton channel. CF(1) has five subunits: alpha(3), beta(3), gamma(1), delta(1), epsilon(1). CF(0) has four main subunits: a, b, b' and c.

Its subcellular location is the plastid. The protein resides in the chloroplast thylakoid membrane. It catalyses the reaction ATP + H2O + 4 H(+)(in) = ADP + phosphate + 5 H(+)(out). Produces ATP from ADP in the presence of a proton gradient across the membrane. The alpha chain is a regulatory subunit. This chain is ATP synthase subunit alpha, chloroplastic, found in Chloranthus spicatus (Chulantree).